Consider the following 47-residue polypeptide: PhoP/PhoQ regulator MgrB (47 aa).

Residues 6 to 26 (WLVLIVVVLACLVLWAQVINI) form a helical membrane-spanning segment.

The protein belongs to the MgrB family. In terms of assembly, may form homooligomers. Probably interacts with the periplasmic domain of PhoQ.

It localises to the cell inner membrane. In terms of biological role, phoP-regulated transcription is redox-sensitive, being activated when the periplasm becomes more reducing. MgrB acts between DsbA/DsbB and PhoP/PhoQ in this pathway. Represses PhoP/PhoQ signaling, possibly by binding to the periplasmic domain of PhoQ, altering its activity and that of downstream effector PhoP. The chain is PhoP/PhoQ regulator MgrB from Escherichia fergusonii (strain ATCC 35469 / DSM 13698 / CCUG 18766 / IAM 14443 / JCM 21226 / LMG 7866 / NBRC 102419 / NCTC 12128 / CDC 0568-73).